A 260-amino-acid chain; its full sequence is Phytolongin Phyl2.1 (260 aa).

The region spanning 12–114 (CIAKGTVILA…LDNPTQHCLQ (103 aa)) is the Longin domain. A helical; Anchor for type IV membrane protein transmembrane segment spans residues 231–251 (WIVLMFDLCICLVLFGIWLWI).

Belongs to the synaptobrevin family.

The protein localises to the membrane. Non-SNARE longin protein involved in membrane-trafficking machinery. In Arabidopsis thaliana (Mouse-ear cress), this protein is Phytolongin Phyl2.1.